The following is a 635-amino-acid chain: 1-deoxy-D-xylulose-5-phosphate synthase (635 aa).

Residues His-72 and 113 to 115 (GHA) contribute to the thiamine diphosphate site. Asp-144 contacts Mg(2+). Thiamine diphosphate-binding positions include 145–146 (GA), Asn-174, Tyr-287, and Glu-370. Asn-174 contacts Mg(2+).

The protein belongs to the transketolase family. DXPS subfamily. Homodimer. It depends on Mg(2+) as a cofactor. Requires thiamine diphosphate as cofactor.

It carries out the reaction D-glyceraldehyde 3-phosphate + pyruvate + H(+) = 1-deoxy-D-xylulose 5-phosphate + CO2. Its pathway is metabolic intermediate biosynthesis; 1-deoxy-D-xylulose 5-phosphate biosynthesis; 1-deoxy-D-xylulose 5-phosphate from D-glyceraldehyde 3-phosphate and pyruvate: step 1/1. In terms of biological role, catalyzes the acyloin condensation reaction between C atoms 2 and 3 of pyruvate and glyceraldehyde 3-phosphate to yield 1-deoxy-D-xylulose-5-phosphate (DXP). The polypeptide is 1-deoxy-D-xylulose-5-phosphate synthase (Trichormus variabilis (strain ATCC 29413 / PCC 7937) (Anabaena variabilis)).